The following is a 274-amino-acid chain: Large ribosomal subunit protein uL2cz/uL2cy (274 aa).

Disordered regions lie at residues 1–20 (MAIH…AVDS) and 223–274 (MNPV…RRSK).

It belongs to the universal ribosomal protein uL2 family. As to quaternary structure, part of the 50S ribosomal subunit.

Its subcellular location is the plastid. It localises to the chloroplast. This Eucalyptus globulus subsp. globulus (Tasmanian blue gum) protein is Large ribosomal subunit protein uL2cz/uL2cy (rpl2-A).